A 110-amino-acid chain; its full sequence is Phosphoribosyl-ATP pyrophosphatase (110 aa).

Belongs to the PRA-PH family.

Its subcellular location is the cytoplasm. The catalysed reaction is 1-(5-phospho-beta-D-ribosyl)-ATP + H2O = 1-(5-phospho-beta-D-ribosyl)-5'-AMP + diphosphate + H(+). It functions in the pathway amino-acid biosynthesis; L-histidine biosynthesis; L-histidine from 5-phospho-alpha-D-ribose 1-diphosphate: step 2/9. This is Phosphoribosyl-ATP pyrophosphatase from Clostridium botulinum (strain ATCC 19397 / Type A).